A 439-amino-acid chain; its full sequence is ATP-dependent RNA helicase RhlB (439 aa).

Positions 9-37 (QKFADLPLHPEVKQALAENGFEFCTPIQA) match the Q motif motif. The 180-residue stretch at 40 to 219 (LPVLLQSKDI…YDHMNDPVKV (180 aa)) folds into the Helicase ATP-binding domain. An ATP-binding site is contributed by 53–60 (AQTGTGKT). Positions 165-168 (DEAD) match the DEAD box motif. One can recognise a Helicase C-terminal domain in the interval 243-390 (KMRLLLTLIE…VSNYDSSALL (148 aa)). Positions 398–439 (KIPRKHPAGTRNLRERAGAGRPQGAHRSGGRPPRHDRTRRHS) are disordered. A compositionally biased stretch (basic residues) spans 425 to 439 (SGGRPPRHDRTRRHS).

The protein belongs to the DEAD box helicase family. RhlB subfamily. In terms of assembly, component of the RNA degradosome, which is a multiprotein complex involved in RNA processing and mRNA degradation.

The protein localises to the cytoplasm. It catalyses the reaction ATP + H2O = ADP + phosphate + H(+). In terms of biological role, DEAD-box RNA helicase involved in RNA degradation. Has RNA-dependent ATPase activity and unwinds double-stranded RNA. The polypeptide is ATP-dependent RNA helicase RhlB (Shewanella putrefaciens (strain CN-32 / ATCC BAA-453)).